A 469-amino-acid chain; its full sequence is Neuraminidase (469 aa).

At Met-1–Lys-6 the chain is on the intravirion side. The helical transmembrane segment at Ile-7 to Leu-29 threads the bilayer. An involved in apical transport and lipid raft association region spans residues Gly-11–Val-33. Topologically, residues Ala-30–Ile-469 are virion surface. Residues His-36–Ser-88 are hypervariable stalk region. 4 N-linked (GlcNAc...) asparagine; by host glycosylation sites follow: Asn-61, Asn-69, Asn-70, and Asn-86. The segment at Gln-91–Ile-469 is head of neuraminidase. Disulfide bonds link Cys-92-Cys-417, Cys-124-Cys-129, Cys-183-Cys-230, Cys-232-Cys-237, Cys-278-Cys-291, Cys-280-Cys-289, Cys-318-Cys-337, and Cys-421-Cys-447. Residue Arg-118 coordinates substrate. N-linked (GlcNAc...) asparagine; by host glycosylation is present at Asn-146. The active-site Proton donor/acceptor is the Asp-151. Arg-152 serves as a coordination point for substrate. Asn-200 and Asn-234 each carry an N-linked (GlcNAc...) asparagine; by host glycan. Position 276–277 (Glu-276–Glu-277) interacts with substrate. Substrate is bound at residue Arg-292. Ca(2+) is bound by residues Asp-293, Gly-297, and Asp-324. The interval Thr-325–Val-349 is disordered. Residue Arg-371 coordinates substrate. N-linked (GlcNAc...) asparagine; by host glycosylation occurs at Asn-402. Tyr-406 serves as the catalytic Nucleophile.

This sequence belongs to the glycosyl hydrolase 34 family. In terms of assembly, homotetramer. It depends on Ca(2+) as a cofactor. In terms of processing, N-glycosylated.

It localises to the virion membrane. The protein resides in the host apical cell membrane. It catalyses the reaction Hydrolysis of alpha-(2-&gt;3)-, alpha-(2-&gt;6)-, alpha-(2-&gt;8)- glycosidic linkages of terminal sialic acid residues in oligosaccharides, glycoproteins, glycolipids, colominic acid and synthetic substrates.. With respect to regulation, inhibited by the neuraminidase inhibitors zanamivir (Relenza) and oseltamivir (Tamiflu). These drugs interfere with the release of progeny virus from infected cells and are effective against all influenza strains. Resistance to neuraminidase inhibitors is quite rare. Functionally, catalyzes the removal of terminal sialic acid residues from viral and cellular glycoconjugates. Cleaves off the terminal sialic acids on the glycosylated HA during virus budding to facilitate virus release. Additionally helps virus spread through the circulation by further removing sialic acids from the cell surface. These cleavages prevent self-aggregation and ensure the efficient spread of the progeny virus from cell to cell. Otherwise, infection would be limited to one round of replication. Described as a receptor-destroying enzyme because it cleaves a terminal sialic acid from the cellular receptors. May facilitate viral invasion of the upper airways by cleaving the sialic acid moieties on the mucin of the airway epithelial cells. Likely to plays a role in the budding process through its association with lipid rafts during intracellular transport. May additionally display a raft-association independent effect on budding. Plays a role in the determination of host range restriction on replication and virulence. Sialidase activity in late endosome/lysosome traffic seems to enhance virus replication. The polypeptide is Neuraminidase (Influenza A virus (strain A/Leningrad/134/17/1957 H2N2)).